The primary structure comprises 212 residues: Peptide methionine sulfoxide reductase MsrA (212 aa).

Residue Cys52 is part of the active site.

It belongs to the MsrA Met sulfoxide reductase family.

It catalyses the reaction L-methionyl-[protein] + [thioredoxin]-disulfide + H2O = L-methionyl-(S)-S-oxide-[protein] + [thioredoxin]-dithiol. The enzyme catalyses [thioredoxin]-disulfide + L-methionine + H2O = L-methionine (S)-S-oxide + [thioredoxin]-dithiol. Functionally, has an important function as a repair enzyme for proteins that have been inactivated by oxidation. Catalyzes the reversible oxidation-reduction of methionine sulfoxide in proteins to methionine. This is Peptide methionine sulfoxide reductase MsrA from Salmonella paratyphi A (strain AKU_12601).